A 118-amino-acid polypeptide reads, in one-letter code: Large ribosomal subunit protein bL17 (118 aa).

Belongs to the bacterial ribosomal protein bL17 family. As to quaternary structure, part of the 50S ribosomal subunit. Contacts protein L32.

This Gemmatimonas aurantiaca (strain DSM 14586 / JCM 11422 / NBRC 100505 / T-27) protein is Large ribosomal subunit protein bL17.